Reading from the N-terminus, the 397-residue chain is uncharacterized protein (397 aa).

11 helical membrane passes run 9 to 29, 38 to 58, 85 to 105, 112 to 132, 148 to 168, 182 to 202, 226 to 246, 271 to 291, 310 to 330, 331 to 351, and 365 to 385; these read NAVL…GFLT, LLAS…GAQL, FLAA…VGGA, IFGI…ILIF, MGFI…PPVV, PIAI…FAGA, AILI…GVVS, VLFG…AAYT, WIIA…KPAA, VLVF…ALIL, and HPVF…ILSG.

It belongs to the NRAMP family.

The protein resides in the cell membrane. This is an uncharacterized protein from Haemophilus influenzae (strain ATCC 51907 / DSM 11121 / KW20 / Rd).